Consider the following 104-residue polypeptide: Photosystem II reaction center Psb28 protein (104 aa).

This sequence belongs to the Psb28 family. Part of the photosystem II complex.

It localises to the cellular thylakoid membrane. This chain is Photosystem II reaction center Psb28 protein, found in Synechococcus sp. (strain JA-3-3Ab) (Cyanobacteria bacterium Yellowstone A-Prime).